The sequence spans 190 residues: Ubiquinol-cytochrome c reductase iron-sulfur subunit (190 aa).

The chain crosses the membrane as a helical span at residues 18-39 (FLYYATAGAGTVAAGAAAWTLV). Residues 95–188 (GQLIDRSAQN…AEFLDDTTIK (94 aa)) form the Rieske domain. [2Fe-2S] cluster is bound by residues Cys132, His134, Cys152, and His155. Cys137 and Cys154 form a disulfide bridge.

The protein belongs to the Rieske iron-sulfur protein family. In terms of assembly, the main subunits of complex b-c1 are: cytochrome b, cytochrome c1 and the Rieske protein. [2Fe-2S] cluster serves as cofactor.

Its subcellular location is the cell membrane. It catalyses the reaction a quinol + 2 Fe(III)-[cytochrome c](out) = a quinone + 2 Fe(II)-[cytochrome c](out) + 2 H(+)(out). Functionally, component of the ubiquinol-cytochrome c reductase complex (complex III or cytochrome b-c1 complex), which is a respiratory chain that generates an electrochemical potential coupled to ATP synthesis. The sequence is that of Ubiquinol-cytochrome c reductase iron-sulfur subunit (petA) from Paracoccus denitrificans.